Consider the following 160-residue polypeptide: SsrA-binding protein (160 aa).

Residues 134–160 are disordered; that stretch reads RKAHDKREAVKERDWNRDKARLMRDRG. Positions 138 to 160 are enriched in basic and acidic residues; it reads DKREAVKERDWNRDKARLMRDRG.

It belongs to the SmpB family.

It is found in the cytoplasm. Functionally, required for rescue of stalled ribosomes mediated by trans-translation. Binds to transfer-messenger RNA (tmRNA), required for stable association of tmRNA with ribosomes. tmRNA and SmpB together mimic tRNA shape, replacing the anticodon stem-loop with SmpB. tmRNA is encoded by the ssrA gene; the 2 termini fold to resemble tRNA(Ala) and it encodes a 'tag peptide', a short internal open reading frame. During trans-translation Ala-aminoacylated tmRNA acts like a tRNA, entering the A-site of stalled ribosomes, displacing the stalled mRNA. The ribosome then switches to translate the ORF on the tmRNA; the nascent peptide is terminated with the 'tag peptide' encoded by the tmRNA and targeted for degradation. The ribosome is freed to recommence translation, which seems to be the essential function of trans-translation. The chain is SsrA-binding protein from Azorhizobium caulinodans (strain ATCC 43989 / DSM 5975 / JCM 20966 / LMG 6465 / NBRC 14845 / NCIMB 13405 / ORS 571).